A 211-amino-acid chain; its full sequence is Putative hydrolase SMU_367 (211 aa).

An N-terminal signal peptide occupies residues 1-29 (MKKQFLEKAVFTVAATAATVVLGNKMADA). In terms of domain architecture, LysM spans 30-74 (DTYTLQEGDSFFSVAQRYHMDAYELASMNGKDITSLILPGQTLTV). The disordered stretch occupies residues 77–101 (SAAPDNQAAAPTDTTQATTETNDAN). Over residues 78-101 (AAPDNQAAAPTDTTQATTETNDAN) the composition is skewed to low complexity. The 125-residue stretch at 85-209 (AAPTDTTQAT…GTPGSVSYIY (125 aa)) folds into the Peptidase C51 domain.

This chain is Putative hydrolase SMU_367, found in Streptococcus mutans serotype c (strain ATCC 700610 / UA159).